The sequence spans 506 residues: Glutamate--tRNA ligase (506 aa).

Positions 14–24 (PSPTGYLHIGG) match the 'HIGH' region motif. The short motif at 261–265 (KLSKR) is the 'KMSKS' region element. K264 contacts ATP.

Belongs to the class-I aminoacyl-tRNA synthetase family. Glutamate--tRNA ligase type 1 subfamily. In terms of assembly, monomer.

It is found in the cytoplasm. The catalysed reaction is tRNA(Glu) + L-glutamate + ATP = L-glutamyl-tRNA(Glu) + AMP + diphosphate. Functionally, catalyzes the attachment of glutamate to tRNA(Glu) in a two-step reaction: glutamate is first activated by ATP to form Glu-AMP and then transferred to the acceptor end of tRNA(Glu). The sequence is that of Glutamate--tRNA ligase from Roseiflexus sp. (strain RS-1).